Consider the following 371-residue polypeptide: Protein-tyrosine sulfotransferase 2 (371 aa).

At 1–8 the chain is on the cytoplasmic side; it reads MRVTMRRV. A helical; Signal-anchor for type II membrane protein transmembrane segment spans residues 9–25; that stretch reads LLAVGSVVALMVTLHLG. Topologically, residues 26–371 are lumenal; that stretch reads QQVLECQHVL…QVTQNTSSSH (346 aa). A 3'-phosphoadenylyl sulfate-binding site is contributed by 76 to 80; that stretch reads RSGTT. Residues cysteine 94 and cysteine 154 are joined by a disulfide bond. Glutamate 97 acts as the Proton donor/acceptor in catalysis. The segment at 99–103 is interaction with peptide substrate; sequence RIIPR. Positions 181, 189, and 193 each coordinate 3'-phosphoadenylyl sulfate. A disulfide bond links cysteine 223 and cysteine 231. Residues tyrosine 236, 283-292, and lysine 298 contribute to the 3'-phosphoadenylyl sulfate site; that span reads STDQVIKPVN. Residues asparagine 341 and asparagine 366 are each glycosylated (N-linked (GlcNAc...) asparagine).

This sequence belongs to the protein sulfotransferase family.

Its subcellular location is the golgi apparatus membrane. The catalysed reaction is L-tyrosyl-[protein] + 3'-phosphoadenylyl sulfate = O-sulfo-L-tyrosine-[protein] + adenosine 3',5'-bisphosphate + H(+). In terms of biological role, catalyzes the O-sulfation of tyrosine residues within acidic motifs of polypeptides, using 3'-phosphoadenylyl sulfate (PAPS) as cosubstrate. This is Protein-tyrosine sulfotransferase 2 (TPST2) from Gallus gallus (Chicken).